The chain runs to 240 residues: NAD(P)H-quinone oxidoreductase subunit K (240 aa).

[4Fe-4S] cluster contacts are provided by Cys-55, Cys-56, Cys-120, and Cys-151.

It belongs to the complex I 20 kDa subunit family. As to quaternary structure, NDH-1 can be composed of about 15 different subunits; different subcomplexes with different compositions have been identified which probably have different functions. The cofactor is [4Fe-4S] cluster.

Its subcellular location is the cellular thylakoid membrane. The catalysed reaction is a plastoquinone + NADH + (n+1) H(+)(in) = a plastoquinol + NAD(+) + n H(+)(out). The enzyme catalyses a plastoquinone + NADPH + (n+1) H(+)(in) = a plastoquinol + NADP(+) + n H(+)(out). NDH-1 shuttles electrons from an unknown electron donor, via FMN and iron-sulfur (Fe-S) centers, to quinones in the respiratory and/or the photosynthetic chain. The immediate electron acceptor for the enzyme in this species is believed to be plastoquinone. Couples the redox reaction to proton translocation, and thus conserves the redox energy in a proton gradient. Cyanobacterial NDH-1 also plays a role in inorganic carbon-concentration. The sequence is that of NAD(P)H-quinone oxidoreductase subunit K from Trichodesmium erythraeum (strain IMS101).